The following is a 938-amino-acid chain: MTDYKNTLNLPETGFPMRGDLAKREPAMLQNWHDKKLYQKIREASKGKRSFILHDGPPYANGNIHLGHAVNHILKDIINKSKTAMGFDTPYVPGWDCHGLPIELKVEGLVGKPNENISASEFRQKCREYAKEQVDGQKADFMRLGILGDWDNPYLTMNFDTEAHIIRTLGKVIANGHLYKGSKPVHWCLDCGSSLAEAEVEYEDKVSPSIYVRFSAVDPVAVEAKFNAQGKGSGQISAVIWTTTPWTLPSNRAIALNSELEYQLVQFGDERVILATELVEAVQKVTGVEQVEVLGSAKGSDLELMRFNHPFYDFSVPFILGDHVTTDGGTGLVHTAPDHGLDDYIVGQKYKLEMAGLVANDGKFISTTPFFAGKGVFETNDLVLEKLKETGALLKLERIKHSYPHCWRHKTPIIFRATPQWFIGMETQGLRKQALGEIKRVRWIPSWGEARIDTMVANRPDWCISRQRTWGVPMTMFVHNETEQLHPRTLEILEEVAKRVEQAGIQAWWDLDPKEVLGEEDAKIYRKVPDTLDVWFDSGSTYASVVQQRPEFNGNSADMYLEGSDQHRGWFMSSLMLSTATDNKAPYNQVLTHGFTVDEKGRKMSKSLGNVIVPSEVWNKNGADILRLWVASTDYTGEIAVSHNILNSAGDTYRRIRNTARFLLANLNGFDPKRDLVKPEEMIALDRWAVSCALDAQNDIKEAYDNYQFHTVVQRLMRFCSIEMGSFYLDIIKDRQYTTKADSLARRSCQTALWHISEALVRWIAPILSFTADEIWGYLPQVEGRSEFVFTEEFYTDLFGLSESDKLDDNYWQKLLKVRAEVNRVLEQARNDKLIGAALEAKVTVYANDDIRPLLEQLGNELGFVLITSQAIVKPLAEADVAEGELAGLAVKVERADGEKCPRCWHYATDIGANAEHAEICGRCVENVVGEGETRNFA.

Residues 58-68 (PYANGNIHLGH) carry the 'HIGH' region motif. Glutamate 562 contributes to the L-isoleucyl-5'-AMP binding site. Positions 603–607 (KMSKS) match the 'KMSKS' region motif. Residue lysine 606 participates in ATP binding. 4 residues coordinate Zn(2+): cysteine 901, cysteine 904, cysteine 921, and cysteine 924.

Belongs to the class-I aminoacyl-tRNA synthetase family. IleS type 1 subfamily. In terms of assembly, monomer. It depends on Zn(2+) as a cofactor.

The protein resides in the cytoplasm. The catalysed reaction is tRNA(Ile) + L-isoleucine + ATP = L-isoleucyl-tRNA(Ile) + AMP + diphosphate. Functionally, catalyzes the attachment of isoleucine to tRNA(Ile). As IleRS can inadvertently accommodate and process structurally similar amino acids such as valine, to avoid such errors it has two additional distinct tRNA(Ile)-dependent editing activities. One activity is designated as 'pretransfer' editing and involves the hydrolysis of activated Val-AMP. The other activity is designated 'posttransfer' editing and involves deacylation of mischarged Val-tRNA(Ile). The chain is Isoleucine--tRNA ligase from Glaesserella parasuis serovar 5 (strain SH0165) (Haemophilus parasuis).